The following is a 140-amino-acid chain: Large ribosomal subunit protein uL11 (140 aa).

Belongs to the universal ribosomal protein uL11 family. Part of the ribosomal stalk of the 50S ribosomal subunit. Interacts with L10 and the large rRNA to form the base of the stalk. L10 forms an elongated spine to which L12 dimers bind in a sequential fashion forming a multimeric L10(L12)X complex. Post-translationally, one or more lysine residues are methylated.

Functionally, forms part of the ribosomal stalk which helps the ribosome interact with GTP-bound translation factors. In Geobacter metallireducens (strain ATCC 53774 / DSM 7210 / GS-15), this protein is Large ribosomal subunit protein uL11.